The primary structure comprises 695 residues: MSEFQLVSSYQPTGDQPKAIAGLVKSILEGHRFQTLLGATGTGKTFTIAHTIQQVGRPTLVMAPNKTLAAQLCNELRELFPYNAVEYFISYYDYYQPEAYVPSTDTYIAKSSSINDEIDMLRHSATRSLFERRDVIVVASVSCIYGLGMPEEYLKASIPFQVGQEINQREVLRDLAGIQYERNDLELARGRFRVKGDVLEIVPAYEDRVIRIEFFGDEIEAIRLIDPVTGEILTSLSALRVYPARHFVTPEAQLQQAILNIEQELEEQLAFFRKQGKLLEAQRLEQRTRYDLEMLREVGYCNGIENYSRHLTGRKEGEPPACLVDYFKANDWLLVVDESHVTVPQIRGMYNGDRARKQVLVDHGFRLPSALDNRPLKAEEFWAKVHQCVFVSATPGNWELEQSGAQFETVVENGKTLKFYVPGTGRVIEQVIRPTGVVDPEVHVRPTAGQVEDLLGEIYLRLERSQQGLPERVIVTTLTKRMAEDLTEYLQERGIRVRYLHSEISSIERIEILQDFREGAFDVLVGVNLLREGLDLPEVSLVAILDADKEGFLRAERSLIQMIGRAARNVRGTVVMYADTLTGSMARAIAETQRRREIQLQYNRQHNITPKPIIKKNSNAILSFLAISRKLNSQDLEKAFPVADEIPLSEIPELIGQLELKMKAAAKNLEFEEAAQLRDQIKKLRQRLLGHHQST.

Positions Lys-25–Ala-176 constitute a Helicase ATP-binding domain. Position 38 to 45 (Gly-38 to Thr-45) interacts with ATP. The Beta-hairpin signature appears at Tyr-91–Ile-114. Positions Leu-454 to Asn-617 constitute a Helicase C-terminal domain. The UVR domain maps to Pro-652–Arg-687.

Belongs to the UvrB family. In terms of assembly, forms a heterotetramer with UvrA during the search for lesions. Interacts with UvrC in an incision complex.

Its subcellular location is the cytoplasm. In terms of biological role, the UvrABC repair system catalyzes the recognition and processing of DNA lesions. A damage recognition complex composed of 2 UvrA and 2 UvrB subunits scans DNA for abnormalities. Upon binding of the UvrA(2)B(2) complex to a putative damaged site, the DNA wraps around one UvrB monomer. DNA wrap is dependent on ATP binding by UvrB and probably causes local melting of the DNA helix, facilitating insertion of UvrB beta-hairpin between the DNA strands. Then UvrB probes one DNA strand for the presence of a lesion. If a lesion is found the UvrA subunits dissociate and the UvrB-DNA preincision complex is formed. This complex is subsequently bound by UvrC and the second UvrB is released. If no lesion is found, the DNA wraps around the other UvrB subunit that will check the other stand for damage. This chain is UvrABC system protein B, found in Synechococcus sp. (strain JA-3-3Ab) (Cyanobacteria bacterium Yellowstone A-Prime).